The primary structure comprises 1323 residues: uncharacterized protein (1323 aa).

Residues 1-11 are compositionally biased toward basic and acidic residues; the sequence is MRELQGDDSSR. Disordered stretches follow at residues 1-57 and 79-112; these read MREL…SSYY and IHES…HSET. Residues 12-21 are compositionally biased toward low complexity; sequence KSPPSDSVVK. Residue serine 24 is modified to Phosphoserine. Residues 27-40 are compositionally biased toward basic and acidic residues; the sequence is DYEHSLKSLQDERT. Composition is skewed to polar residues over residues 42 to 57 and 80 to 105; these read NYPN…SSYY and HESS…SSTI. WD repeat units follow at residues 271–314, 320–360, 364–403, 409–449, 453–494, and 502–551; these read RHST…DRAI, GHTR…FPVN, DWHN…APLH, ENIT…EEPE, TTDS…KEGP, and GHTD…LNSM. The RWD domain maps to 671–779; that stretch reads EELSWIGQKY…SYLSGNLSVD (109 aa). A compositionally biased stretch (polar residues) spans 879–888; the sequence is SNSVADSDST. The interval 879–904 is disordered; that stretch reads SNSVADSDSTNYDDENSLNRGGTSES. Residues 1265-1309 form an RING-type; degenerate zinc finger; sequence CTFCCLSIHGLCIVCGLCLHVMHEDCYKEWFSNGDSISQSCSSGC.

The protein belongs to the WD repeat WDR59 family.

Its function is as follows. May be involved in telomere capping. This is an uncharacterized protein from Schizosaccharomyces pombe (strain 972 / ATCC 24843) (Fission yeast).